Consider the following 181-residue polypeptide: ATP-dependent protease subunit HslV (181 aa).

Residue threonine 7 is part of the active site. Na(+) contacts are provided by glycine 166, cysteine 169, and threonine 172.

This sequence belongs to the peptidase T1B family. HslV subfamily. As to quaternary structure, a double ring-shaped homohexamer of HslV is capped on each side by a ring-shaped HslU homohexamer. The assembly of the HslU/HslV complex is dependent on binding of ATP.

It localises to the cytoplasm. The catalysed reaction is ATP-dependent cleavage of peptide bonds with broad specificity.. Its activity is regulated as follows. Allosterically activated by HslU binding. Protease subunit of a proteasome-like degradation complex believed to be a general protein degrading machinery. The sequence is that of ATP-dependent protease subunit HslV from Variovorax paradoxus (strain S110).